A 286-amino-acid chain; its full sequence is Bifunctional protein FolD (286 aa).

NADP(+)-binding positions include 165 to 167 (GRS) and S190.

It belongs to the tetrahydrofolate dehydrogenase/cyclohydrolase family. Homodimer.

It catalyses the reaction (6R)-5,10-methylene-5,6,7,8-tetrahydrofolate + NADP(+) = (6R)-5,10-methenyltetrahydrofolate + NADPH. The catalysed reaction is (6R)-5,10-methenyltetrahydrofolate + H2O = (6R)-10-formyltetrahydrofolate + H(+). Its pathway is one-carbon metabolism; tetrahydrofolate interconversion. In terms of biological role, catalyzes the oxidation of 5,10-methylenetetrahydrofolate to 5,10-methenyltetrahydrofolate and then the hydrolysis of 5,10-methenyltetrahydrofolate to 10-formyltetrahydrofolate. The chain is Bifunctional protein FolD from Paraburkholderia phytofirmans (strain DSM 17436 / LMG 22146 / PsJN) (Burkholderia phytofirmans).